The primary structure comprises 387 residues: Protein BTN1 (387 aa).

The signal sequence occupies residues 1–31; the sequence is MELDRDKKTFAYFWLFGLINNILYVVILSAA. Transmembrane regions (helical) follow at residues 43-63, 72-92, 93-113, 129-149, 151-171, 225-245, 257-276, 278-298, 308-328, and 347-367; these read IVLL…PFFV, IPIL…RSLW, LCLP…ITFL, SGTG…TTVF, LNIQ…LLYY, TVYL…LFPI, YVTY…TWGH, LPVK…LITL, SISW…SSYV, and LGSV…LGII.

It belongs to the battenin family.

The protein localises to the vacuole membrane. Its function is as follows. Involved in vacuolar transport and vacuole pH homeostasis. Also required for cytokinesis. The polypeptide is Protein BTN1 (BTN1) (Kluyveromyces lactis (strain ATCC 8585 / CBS 2359 / DSM 70799 / NBRC 1267 / NRRL Y-1140 / WM37) (Yeast)).